Here is a 308-residue protein sequence, read N- to C-terminus: MNYSLKQLKVFVTVAQEKSFSRAGERIGLSQSAVSHSVKELENHTGVRLLDRTTREVVLTDAGQQLALRLERLLDELNSTLRDTGRMGQQLSGKVRVAASQTISAHLIPQCIAESHRRYPDIQFVLHDRPQQWVMESIRQGDVDFGIVIDPGPVGDLQCEAILSEPFFLLCHRDSALAVEDYVPWQALQGAKLVLQDYASGSRPLIDAALARNGIQANIVQEIGHPATLFPMVAAGIGISILPALALPLPEGSPLVVKRITPVVERQLMLVRRKNRSLSTAAEALWDVVRDQGNALMAGREGDPLYQI.

The HTH lysR-type domain maps to 1–60; it reads MNYSLKQLKVFVTVAQEKSFSRAGERIGLSQSAVSHSVKELENHTGVRLLDRTTREVVLT. The segment at residues 20–39 is a DNA-binding region (H-T-H motif); that stretch reads FSRAGERIGLSQSAVSHSVK.

This sequence belongs to the LysR transcriptional regulatory family.

This is an uncharacterized protein from Shigella flexneri.